The primary structure comprises 219 residues: 2-phospho-L-lactate guanylyltransferase (219 aa).

It belongs to the CofC family. Homodimer.

It catalyses the reaction (2S)-2-phospholactate + GTP + H(+) = (2S)-lactyl-2-diphospho-5'-guanosine + diphosphate. The protein operates within cofactor biosynthesis; coenzyme F420 biosynthesis. In terms of biological role, guanylyltransferase that catalyzes the activation of (2S)-2-phospholactate (2-PL) as (2S)-lactyl-2-diphospho-5'-guanosine, via the condensation of 2-PL with GTP. It is involved in the biosynthesis of coenzyme F420, a hydride carrier cofactor. The protein is 2-phospho-L-lactate guanylyltransferase of Methanocaldococcus vulcanius (strain ATCC 700851 / DSM 12094 / M7) (Methanococcus vulcanius).